The primary structure comprises 273 residues: Tetraspanin-8 (273 aa).

The Cytoplasmic segment spans residues 1 to 7 (MARCSNN). Residues 8–28 (LVGILNFLVFLLSIPILAGGI) traverse the membrane as a helical segment. Residues 29 to 45 (WLSQKGSTECERFLDKP) lie on the Extracellular side of the membrane. Residues 46–66 (VIALGVFLMVVAIAGLIGSCC) traverse the membrane as a helical segment. Residues 67 to 75 (RVTWLLWVY) lie on the Cytoplasmic side of the membrane. The chain crosses the membrane as a helical span at residues 76–96 (LFVMFLLILLVFCITVFAFVV). Over 97–235 (TNKGAGEAIE…NVKSAWKKVA (139 aa)) the chain is Extracellular. The N-linked (GlcNAc...) asparagine glycan is linked to Asn192. A helical transmembrane segment spans residues 236–256 (IVNIVFLVFLIIVYSVGCCAF). Over 257 to 273 (RNNKRDDSYSRTYGYKP) the chain is Cytoplasmic.

This sequence belongs to the tetraspanin (TM4SF) family.

The protein resides in the membrane. Its function is as follows. May be involved in the regulation of cell differentiation. This is Tetraspanin-8 (TET8) from Arabidopsis thaliana (Mouse-ear cress).